A 488-amino-acid polypeptide reads, in one-letter code: Probable (S)-N-methylcoclaurine 3'-hydroxylase isozyme 2 (488 aa).

Residues 2-21 form a helical membrane-spanning segment; that stretch reads EVLSIAIVSFSFLLFLFFIL. A heme-binding site is contributed by Cys-427.

The protein belongs to the cytochrome P450 family. Heme serves as cofactor. As to expression, expressed at low levels in roots.

It localises to the endoplasmic reticulum membrane. It is found in the microsome membrane. It carries out the reaction (S)-N-methylcoclaurine + reduced [NADPH--hemoprotein reductase] + O2 = (S)-3'-hydroxy-N-methylcoclaurine + oxidized [NADPH--hemoprotein reductase] + H2O + H(+). The protein operates within alkaloid biosynthesis; (S)-reticuline biosynthesis; (S)-reticuline from (S)-norcoclaurine: step 3/4. Its function is as follows. 3'-hydroxylation of (S)-N-methylcoclaurine. The chain is Probable (S)-N-methylcoclaurine 3'-hydroxylase isozyme 2 (CYP80B2) from Coptis japonica (Japanese goldthread).